Consider the following 353-residue polypeptide: Photosystem II D2 protein (353 aa).

The residue at position 2 (threonine 2) is an N-acetylthreonine. Threonine 2 is subject to Phosphothreonine. Residues 41–61 (CAYFALGGWFTGTTFVTSWYT) form a helical membrane-spanning segment. Position 118 (histidine 118) interacts with chlorophyll a. A helical transmembrane segment spans residues 125-141 (GFMLRQFELARSVQLRP). Pheophytin a is bound by residues glutamine 130 and asparagine 143. Residues 153-166 (VFVSVFLIYPLGQS) traverse the membrane as a helical segment. A chlorophyll a-binding site is contributed by histidine 198. The helical transmembrane segment at 208–228 (AALLCAIHGATVENTLFEDGD) threads the bilayer. The a plastoquinone site is built by histidine 215 and phenylalanine 262. Residue histidine 215 coordinates Fe cation. Histidine 269 contacts Fe cation. The chain crosses the membrane as a helical span at residues 279–295 (GLWMSAIGVVGLALNLR).

It belongs to the reaction center PufL/M/PsbA/D family. PSII is composed of 1 copy each of membrane proteins PsbA, PsbB, PsbC, PsbD, PsbE, PsbF, PsbH, PsbI, PsbJ, PsbK, PsbL, PsbM, PsbT, PsbX, PsbY, PsbZ, Psb30/Ycf12, at least 3 peripheral proteins of the oxygen-evolving complex and a large number of cofactors. It forms dimeric complexes. It depends on The D1/D2 heterodimer binds P680, chlorophylls that are the primary electron donor of PSII, and subsequent electron acceptors. It shares a non-heme iron and each subunit binds pheophytin, quinone, additional chlorophylls, carotenoids and lipids. There is also a Cl(-1) ion associated with D1 and D2, which is required for oxygen evolution. The PSII complex binds additional chlorophylls, carotenoids and specific lipids. as a cofactor.

The protein resides in the plastid. It localises to the chloroplast thylakoid membrane. It catalyses the reaction 2 a plastoquinone + 4 hnu + 2 H2O = 2 a plastoquinol + O2. Its function is as follows. Photosystem II (PSII) is a light-driven water:plastoquinone oxidoreductase that uses light energy to abstract electrons from H(2)O, generating O(2) and a proton gradient subsequently used for ATP formation. It consists of a core antenna complex that captures photons, and an electron transfer chain that converts photonic excitation into a charge separation. The D1/D2 (PsbA/PsbD) reaction center heterodimer binds P680, the primary electron donor of PSII as well as several subsequent electron acceptors. D2 is needed for assembly of a stable PSII complex. This Phalaenopsis aphrodite subsp. formosana (Moth orchid) protein is Photosystem II D2 protein.